Reading from the N-terminus, the 277-residue chain is 3-methyl-2-oxobutanoate hydroxymethyltransferase (277 aa).

Residues Asp43 and Asp82 each coordinate Mg(2+). Residues 43–44 (DS), Asp82, and Lys112 contribute to the 3-methyl-2-oxobutanoate site. Glu114 provides a ligand contact to Mg(2+). Glu181 acts as the Proton acceptor in catalysis.

The protein belongs to the PanB family. Homodecamer; pentamer of dimers. Mg(2+) is required as a cofactor.

The protein localises to the cytoplasm. It catalyses the reaction 3-methyl-2-oxobutanoate + (6R)-5,10-methylene-5,6,7,8-tetrahydrofolate + H2O = 2-dehydropantoate + (6S)-5,6,7,8-tetrahydrofolate. It functions in the pathway cofactor biosynthesis; (R)-pantothenate biosynthesis; (R)-pantoate from 3-methyl-2-oxobutanoate: step 1/2. Functionally, catalyzes the reversible reaction in which hydroxymethyl group from 5,10-methylenetetrahydrofolate is transferred onto alpha-ketoisovalerate to form ketopantoate. The protein is 3-methyl-2-oxobutanoate hydroxymethyltransferase of Listeria innocua serovar 6a (strain ATCC BAA-680 / CLIP 11262).